Reading from the N-terminus, the 72-residue chain is Exodeoxyribonuclease 7 small subunit (72 aa).

This sequence belongs to the XseB family. Heterooligomer composed of large and small subunits.

It is found in the cytoplasm. The enzyme catalyses Exonucleolytic cleavage in either 5'- to 3'- or 3'- to 5'-direction to yield nucleoside 5'-phosphates.. Functionally, bidirectionally degrades single-stranded DNA into large acid-insoluble oligonucleotides, which are then degraded further into small acid-soluble oligonucleotides. The chain is Exodeoxyribonuclease 7 small subunit from Chlamydia trachomatis serovar A (strain ATCC VR-571B / DSM 19440 / HAR-13).